The following is a 102-amino-acid chain: FMRFamide-like neuropeptides 9 (102 aa).

Residues 1–19 (MNQFYALFLVACIAAMANA) form the signal peptide. Positions 20–63 (YEEPDLDALAEFCGKESNRKYCDQIAQLATQHAIGINQEQVRME) are excised as a propeptide. The residue at position 72 (Phe-72) is a Phenylalanine amide. Positions 75 to 90 (RSGYPLVIDDEEMRMD) are excised as a propeptide. Phe-99 carries the post-translational modification Phenylalanine amide.

This sequence belongs to the FARP (FMRFamide related peptide) family. In terms of tissue distribution, each flp gene is expressed in a distinct set of neurons.

The protein localises to the secreted. Its function is as follows. FMRFamides and FMRFamide-like peptides are neuropeptides. KPSFVRF-amide: Has no effect on somatic body wall muscle, inhibits contraction of vaginal vera muscle, and inhibits the activity of the dissected pharyngeal myogenic muscle system. Acts as a ligand for the npr-22 receptor in vitro. This chain is FMRFamide-like neuropeptides 9, found in Caenorhabditis elegans.